The following is a 202-amino-acid chain: MNVLRKIVKKCRDEDTQKPSPVSAPPDDDDLWLPPPEYVPLKELTSKKNMRNFCVNGDVKACSPNGYSFRILRHILRSFNEIYSGNHRMIGLVKVVVGLALSGAPVPEGMNWVYKLRRTLIFQWADSRGPLEGEELEYSQEITWDDDTEFVGLQIRVSARQCHIQGRIWCINTNSRACQLWSDMSLQTQRSEEDKDSSLLLE.

Positions 12–33 (RDEDTQKPSPVSAPPDDDDLWL) are disordered. Positions 35–38 (PPEY) match the PPXY motif motif. The interval 115–151 (KLRRTLIFQWADSRGPLEGEELEYSQEITWDDDTEFV) is essential for glycoprotein binding.

The protein belongs to the lyssavirus matrix protein family. As to quaternary structure, homomultimer. Interacts with nucleoprotein and with the cytoplasmic domain of glycoprotein. Interacts with host ATP6V1A; this interaction plays an important role in virion uncoating after viral entry.

It localises to the virion membrane. Its subcellular location is the host endomembrane system. The protein resides in the host cytoplasm. Plays a major role in assembly, budding and uncoating of virion after membrane fusion. Completely covers the ribonucleoprotein coil and keep it in condensed bullet-shaped form. Inhibits viral transcription and stimulates replication. Plays a major role in early induction of TRAIL-mediated apoptosis in infected neurons. Inhibits the integrated stress response (ISR) in the infected cell by blocking the formation of stress granules. The sequence is that of Matrix protein (M) from Rabies virus (strain PM1503/AVO1) (RABV).